Consider the following 369-residue polypeptide: H-2 class I histocompatibility antigen, K-B alpha chain (369 aa).

An N-terminal signal peptide occupies residues 1–21 (MVPCTLLLLLAAALAPTQTRA). The segment at 22-111 (GPHSLRYFVT…LLGYYNQSKG (90 aa)) is alpha-1. Residues 22-305 (GPHSLRYFVT…EPPPSTVSNM (284 aa)) are Extracellular-facing. Residue N107 is glycosylated (N-linked (GlcNAc...) asparagine). The segment at 112–203 (GSHTIQVISG…KNGNATLLRT (92 aa)) is alpha-2. An intrachain disulfide couples C122 to C185. N197 carries N-linked (GlcNAc...) asparagine glycosylation. An alpha-3 region spans residues 204–295 (DSPKAHVTHH…GLPEPLTLRW (92 aa)). The Ig-like C1-type domain maps to 206-294 (PKAHVTHHSR…QGLPEPLTLR (89 aa)). A disulfide bridge links C224 with C280. The connecting peptide stretch occupies residues 296–305 (EPPPSTVSNM). A helical membrane pass occupies residues 306-328 (ATVAVLVVLGAAIVTGAVVAFVM). At 329 to 369 (KMRRRNTGGKGGDYALAPGSQTSDLSLPDCKVMVHDPHSLA) the chain is on the cytoplasmic side. 2 positions are modified to phosphoserine: S351 and S354.

This sequence belongs to the MHC class I family. In terms of assembly, heterodimer of an alpha chain and a beta chain (beta-2-microglobulin).

It localises to the membrane. Its function is as follows. Involved in the presentation of foreign antigens to the immune system. In Mus musculus (Mouse), this protein is H-2 class I histocompatibility antigen, K-B alpha chain (H2-K1).